Consider the following 144-residue polypeptide: Small ribosomal subunit protein uS11 (144 aa).

The disordered stretch occupies residues 123–144 (EDVTPVPTDSTRRKGSRRGRRL). Over residues 135-144 (RKGSRRGRRL) the composition is skewed to basic residues.

This sequence belongs to the universal ribosomal protein uS11 family.

This Trypanosoma brucei brucei protein is Small ribosomal subunit protein uS11 (RPS14).